The sequence spans 232 residues: YlmG homolog protein 1-1, chloroplastic (232 aa).

The transit peptide at 1 to 16 (MAAITALTLRSPVYLP) directs the protein to the chloroplast. A run of 2 helical transmembrane segments spans residues 147–167 (LTVVAVGIKKWLDIYSGVLMV) and 201–221 (IIPPIFDTLDVSPLLAFAVLG).

This sequence belongs to the YggT family.

It is found in the plastid. It localises to the chloroplast thylakoid membrane. Required for the proper distribution of nucleoids in chloroplasts. The nucleoid partitioning by YLMG1-1 may be related to chloroplast division processes. The protein is YlmG homolog protein 1-1, chloroplastic of Arabidopsis thaliana (Mouse-ear cress).